The chain runs to 120 residues: Ribonuclease P protein component (120 aa).

Belongs to the RnpA family. Consists of a catalytic RNA component (M1 or rnpB) and a protein subunit.

The enzyme catalyses Endonucleolytic cleavage of RNA, removing 5'-extranucleotides from tRNA precursor.. Functionally, RNaseP catalyzes the removal of the 5'-leader sequence from pre-tRNA to produce the mature 5'-terminus. It can also cleave other RNA substrates such as 4.5S RNA. The protein component plays an auxiliary but essential role in vivo by binding to the 5'-leader sequence and broadening the substrate specificity of the ribozyme. The protein is Ribonuclease P protein component of Blochmanniella floridana.